A 398-amino-acid polypeptide reads, in one-letter code: Bifunctional enzyme IspD/IspF (398 aa).

Residues 1 to 234 (MSNSKRTAAI…SRLGALLGDI (234 aa)) are 2-C-methyl-D-erythritol 4-phosphate cytidylyltransferase. A 2-C-methyl-D-erythritol 2,4-cyclodiphosphate synthase region spans residues 235–398 (RTGTGYDVHA…LPWGTNGLAD (164 aa)). The a divalent metal cation site is built by aspartate 241 and histidine 243. Residues 241-243 (DVH) and 267-268 (HS) each bind 4-CDP-2-C-methyl-D-erythritol 2-phosphate. Histidine 275 contacts a divalent metal cation. 4-CDP-2-C-methyl-D-erythritol 2-phosphate is bound by residues 289–291 (DIG), 365–368 (TTSE), phenylalanine 372, and arginine 375.

The protein in the N-terminal section; belongs to the IspD/TarI cytidylyltransferase family. IspD subfamily. It in the C-terminal section; belongs to the IspF family. A divalent metal cation is required as a cofactor.

It catalyses the reaction 2-C-methyl-D-erythritol 4-phosphate + CTP + H(+) = 4-CDP-2-C-methyl-D-erythritol + diphosphate. The enzyme catalyses 4-CDP-2-C-methyl-D-erythritol 2-phosphate = 2-C-methyl-D-erythritol 2,4-cyclic diphosphate + CMP. The protein operates within isoprenoid biosynthesis; isopentenyl diphosphate biosynthesis via DXP pathway; isopentenyl diphosphate from 1-deoxy-D-xylulose 5-phosphate: step 2/6. Its pathway is isoprenoid biosynthesis; isopentenyl diphosphate biosynthesis via DXP pathway; isopentenyl diphosphate from 1-deoxy-D-xylulose 5-phosphate: step 4/6. Functionally, bifunctional enzyme that catalyzes the formation of 4-diphosphocytidyl-2-C-methyl-D-erythritol from CTP and 2-C-methyl-D-erythritol 4-phosphate (MEP) (IspD), and catalyzes the conversion of 4-diphosphocytidyl-2-C-methyl-D-erythritol 2-phosphate (CDP-ME2P) to 2-C-methyl-D-erythritol 2,4-cyclodiphosphate (ME-CPP) with a corresponding release of cytidine 5-monophosphate (CMP) (IspF). This is Bifunctional enzyme IspD/IspF from Rhodopseudomonas palustris (strain BisB18).